We begin with the raw amino-acid sequence, 1354 residues long: Phosphoribosylformylglycinamidine synthase (1354 aa).

ATP is bound by residues 327 to 338, 407 to 409, and alanine 714; these read GATTGTGGRLRD and SGF. Aspartate 715, glutamate 754, asparagine 758, and aspartate 918 together coordinate Mg(2+). Residue serine 920 participates in ATP binding. The Glutamine amidotransferase type-1 domain occupies 1087–1337; it reads VAVLREEGVN…EVSPTQSESP (251 aa). Catalysis depends on cysteine 1180, which acts as the Nucleophile. Catalysis depends on residues histidine 1310 and glutamate 1312.

In the N-terminal section; belongs to the FGAMS family.

It catalyses the reaction N(2)-formyl-N(1)-(5-phospho-beta-D-ribosyl)glycinamide + L-glutamine + ATP + H2O = 2-formamido-N(1)-(5-O-phospho-beta-D-ribosyl)acetamidine + L-glutamate + ADP + phosphate + H(+). Its pathway is purine metabolism; IMP biosynthesis via de novo pathway; 5-amino-1-(5-phospho-D-ribosyl)imidazole from N(2)-formyl-N(1)-(5-phospho-D-ribosyl)glycinamide: step 1/2. Phosphoribosylformylglycinamidine synthase involved in the purines biosynthetic pathway. Catalyzes the ATP-dependent conversion of formylglycinamide ribonucleotide (FGAR) and glutamine to yield formylglycinamidine ribonucleotide (FGAM) and glutamate. Because of its role in metabolisms, is involved in sleep regulation. This Drosophila melanogaster (Fruit fly) protein is Phosphoribosylformylglycinamidine synthase.